A 153-amino-acid polypeptide reads, in one-letter code: Interleukin-2 (153 aa).

An N-terminal signal peptide occupies residues 1-20 (MYRMQLLSCIALSLALVTNS). Residue Thr23 is glycosylated (O-linked (GalNAc...) threonine). A disulfide bond links Cys78 and Cys125.

Belongs to the IL-2 family.

The protein resides in the secreted. Functionally, cytokine produced by activated CD4-positive helper T-cells and to a lesser extend activated CD8-positive T-cells and natural killer (NK) cells that plays pivotal roles in the immune response and tolerance. Binds to a receptor complex composed of either the high-affinity trimeric IL-2R (IL2RA/CD25, IL2RB/CD122 and IL2RG/CD132) or the low-affinity dimeric IL-2R (IL2RB and IL2RG). Interaction with the receptor leads to oligomerization and conformation changes in the IL-2R subunits resulting in downstream signaling starting with phosphorylation of JAK1 and JAK3. In turn, JAK1 and JAK3 phosphorylate the receptor to form a docking site leading to the phosphorylation of several substrates including STAT5. This process leads to activation of several pathways including STAT, phosphoinositide-3-kinase/PI3K and mitogen-activated protein kinase/MAPK pathways. Functions as a T-cell growth factor and can increase NK-cell cytolytic activity as well. Promotes strong proliferation of activated B-cells and subsequently immunoglobulin production. Plays a pivotal role in regulating the adaptive immune system by controlling the survival and proliferation of regulatory T-cells, which are required for the maintenance of immune tolerance. Moreover, participates in the differentiation and homeostasis of effector T-cell subsets, including Th1, Th2, Th17 as well as memory CD8-positive T-cells. The polypeptide is Interleukin-2 (IL2) (Homo sapiens (Human)).